Reading from the N-terminus, the 363-residue chain is Probable dual-specificity RNA methyltransferase RlmN (363 aa).

Catalysis depends on Glu106, which acts as the Proton acceptor. The Radical SAM core domain occupies 112–345 (HEYGNSVCVT…VTIRREQGHD (234 aa)). Cys119 and Cys350 form a disulfide bridge. [4Fe-4S] cluster contacts are provided by Cys126, Cys130, and Cys133. Residues 176 to 177 (GE), Ser208, 231 to 233 (SLH), and Asn307 contribute to the S-adenosyl-L-methionine site. Cys350 acts as the S-methylcysteine intermediate in catalysis.

The protein belongs to the radical SAM superfamily. RlmN family. [4Fe-4S] cluster serves as cofactor.

Its subcellular location is the cytoplasm. It carries out the reaction adenosine(2503) in 23S rRNA + 2 reduced [2Fe-2S]-[ferredoxin] + 2 S-adenosyl-L-methionine = 2-methyladenosine(2503) in 23S rRNA + 5'-deoxyadenosine + L-methionine + 2 oxidized [2Fe-2S]-[ferredoxin] + S-adenosyl-L-homocysteine. The catalysed reaction is adenosine(37) in tRNA + 2 reduced [2Fe-2S]-[ferredoxin] + 2 S-adenosyl-L-methionine = 2-methyladenosine(37) in tRNA + 5'-deoxyadenosine + L-methionine + 2 oxidized [2Fe-2S]-[ferredoxin] + S-adenosyl-L-homocysteine. In terms of biological role, specifically methylates position 2 of adenine 2503 in 23S rRNA and position 2 of adenine 37 in tRNAs. This is Probable dual-specificity RNA methyltransferase RlmN from Bacillus velezensis (strain DSM 23117 / BGSC 10A6 / LMG 26770 / FZB42) (Bacillus amyloliquefaciens subsp. plantarum).